Consider the following 755-residue polypeptide: Leucine-rich repeat-containing protein 36 (755 aa).

LRR repeat units follow at residues 51–72 (SLRSLDLSRNLITSLKGIQYLC) and 73–94 (SLQELNLYYNNIPSLVEVSRLQ). Positions 107 to 146 (NPVVRKDTDYRLFAVYTLQTLEKLDDRAVRDSERRAAKLH) constitute an LRRCT domain. Disordered regions lie at residues 354–374 (GKNYREHSIKPSQDKKATTSH) and 448–517 (LPPG…PPIS). Over residues 356–370 (NYREHSIKPSQDKKA) the composition is skewed to basic and acidic residues. Over residues 498 to 510 (LSSDLGSLHGLSG) the composition is skewed to low complexity. Residues 601-671 (VESLKQKLVK…ELTQLKRLEE (71 aa)) adopt a coiled-coil conformation. The tract at residues 701–755 (YSGKSLLPPEKSHPLGRSSPFGKSTLSSSSPMVHDTGQYLIQSVSEADPEPSLWS) is disordered. Residues 721–731 (FGKSTLSSSSP) show a composition bias toward polar residues.

The chain is Leucine-rich repeat-containing protein 36 (Lrrc36) from Mus musculus (Mouse).